Here is a 124-residue protein sequence, read N- to C-terminus: MPTIQQLVRKGRRDKVAKVKTAALKGSPQRRGVCTRVYTTTPKKPNSALRKVARVKLTSQVEVTAYIPGEGHNLQEHSMVLVRGGRVKDLPGVRYKIIRGSLDTQGVKNRKQARSRYGAKKEKS.

The disordered stretch occupies residues 1–30 (MPTIQQLVRKGRRDKVAKVKTAALKGSPQR). At D89 the chain carries 3-methylthioaspartic acid. The interval 105–124 (QGVKNRKQARSRYGAKKEKS) is disordered. Residues 108 to 118 (KNRKQARSRYG) are compositionally biased toward basic residues.

It belongs to the universal ribosomal protein uS12 family. Part of the 30S ribosomal subunit. Contacts proteins S8 and S17. May interact with IF1 in the 30S initiation complex.

Its function is as follows. With S4 and S5 plays an important role in translational accuracy. Functionally, interacts with and stabilizes bases of the 16S rRNA that are involved in tRNA selection in the A site and with the mRNA backbone. Located at the interface of the 30S and 50S subunits, it traverses the body of the 30S subunit contacting proteins on the other side and probably holding the rRNA structure together. The combined cluster of proteins S8, S12 and S17 appears to hold together the shoulder and platform of the 30S subunit. The chain is Small ribosomal subunit protein uS12 from Mycobacterium intracellulare.